The sequence spans 267 residues: GTP cyclohydrolase FolE2 (267 aa).

This sequence belongs to the GTP cyclohydrolase IV family.

The catalysed reaction is GTP + H2O = 7,8-dihydroneopterin 3'-triphosphate + formate + H(+). The protein operates within cofactor biosynthesis; 7,8-dihydroneopterin triphosphate biosynthesis; 7,8-dihydroneopterin triphosphate from GTP: step 1/1. In terms of biological role, converts GTP to 7,8-dihydroneopterin triphosphate. The protein is GTP cyclohydrolase FolE2 of Citrifermentans bemidjiense (strain ATCC BAA-1014 / DSM 16622 / JCM 12645 / Bem) (Geobacter bemidjiensis).